Consider the following 2170-residue polypeptide: Supervillin (2170 aa).

The interval 1–167 (MKRKERIARR…NSRHSRTESG (167 aa)) is interaction with MYLK. 5 disordered regions span residues 37-94 (EDTP…HSLE), 107-327 (RRRQ…QSES), 413-444 (PEPL…NKDL), 511-546 (DYTG…GAEA), and 567-643 (RASK…EDEE). S50 carries the post-translational modification Phosphoserine. Composition is skewed to polar residues over residues 63–73 (PGSSLEKQTPS) and 81–90 (GIHSSGSMDT). Over residues 134 to 166 (SRKDPDVTERRGKSDKQEEQSKDANSRHSRTES) the composition is skewed to basic and acidic residues. Residues 167 to 195 (GPRTSLVASQDCTPLGSNMSDQEQLLNVE) are compositionally biased toward polar residues. A phosphoserine mark is found at S220, S227, and S241. Over residues 230–241 (QIPSSPLQQPAS) the composition is skewed to polar residues. Basic and acidic residues-rich tracts occupy residues 261 to 272 (PTHEWFLQRDSE) and 286 to 297 (KVREKLVKEESA). Residues 298–313 (RSSPELTSESLTQRRQ) are compositionally biased toward polar residues. Residues S299 and S300 each carry the phosphoserine modification. Basic and acidic residues predominate over residues 427-444 (EDDRLVRGHKDPSGNKDL). Basic and acidic residues-rich tracts occupy residues 570–582 (KKPE…ERSA) and 606–615 (ESRKTSERFR). A phosphoserine mark is found at S632, S666, S728, and S761. A disordered region spans residues 743 to 771 (ASAHQKALARDQANEGRESAEPGEPDSST). A compositionally biased stretch (basic and acidic residues) spans 750–762 (LARDQANEGRESA). Phosphotyrosine is present on Y809. A Phosphothreonine modification is found at T811. Phosphoserine occurs at positions 857, 877, and 881. The disordered stretch occupies residues 887 to 909 (AWRPLVEHSGSKGMPGESGKTES). Phosphoserine is present on residues S960, S1011, S1031, and S1077. Residues 1117 to 1137 (HTQEVEQSLKKKRVTESRESQ) form a disordered region. Basic and acidic residues predominate over residues 1119 to 1137 (QEVEQSLKKKRVTESRESQ). The residue at position 1159 (R1159) is an Omega-N-methylarginine. Phosphoserine is present on residues S1181 and S1184. Position 1186 is a phosphothreonine (T1186). Residues S1190, S1278, and S1361 each carry the phosphoserine modification. Residues 1375 to 1643 (SNINLRSVNL…KFLDWTELKR (269 aa)) are interaction with NEB. Gelsolin-like repeat units lie at residues 1397 to 1496 (KKLM…LGGQ), 1516 to 1638 (IETN…FLDW), 1708 to 1818 (VSVD…FQGG), 1837 to 1938 (WRLY…LGRR), and 1971 to 2078 (ATEF…FPSW). The region spanning 2107–2170 (KLCKTIYPLA…VNLKKSKGLF (64 aa)) is the HP domain.

This sequence belongs to the villin/gelsolin family. In terms of assembly, associates with F-actin. Interacts with NEB. Interacts with MYH9. Interacts with MYLK. Interacts with TASOR. Interacts with TRIP6. Interacts with DYNLT1. Interacts with KIF14; at midbody during cytokinesis. In terms of tissue distribution, expressed in the heart, tongue and granular cells within the cerebellum.

It is found in the cell membrane. It localises to the cytoplasm. Its subcellular location is the cytoskeleton. The protein localises to the cell projection. The protein resides in the invadopodium. It is found in the podosome. It localises to the midbody. Its subcellular location is the cleavage furrow. Functionally, forms a high-affinity link between the actin cytoskeleton and the membrane. Is among the first costameric proteins to assemble during myogenesis and it contributes to myogenic membrane structure and differentiation. Appears to be involved in myosin II assembly. May modulate myosin II regulation through MLCK during cell spreading, an initial step in cell migration. May play a role in invadopodial function. May be involved in modulation of focal adhesions. Supervillin-mediated down-regulation of focal adhesions involves binding to TRIP6. Plays a role in cytokinesis through KIF14 interaction. This Mus musculus (Mouse) protein is Supervillin (Svil).